We begin with the raw amino-acid sequence, 119 residues long: Beta-2-microglobulin (119 aa).

The signal sequence occupies residues 1 to 20 (MARFVVVALLVLLSLSGLEA). The region spanning 25–114 (PKIQVYSRHP…VTFSTPKTVK (90 aa)) is the Ig-like C1-type domain. An intrachain disulfide couples C45 to C100.

The protein belongs to the beta-2-microglobulin family. Heterodimer of an alpha chain and a beta chain. Beta-2-microglobulin is the beta-chain of major histocompatibility complex class I molecules.

The protein localises to the secreted. Component of the class I major histocompatibility complex (MHC). Involved in the presentation of peptide antigens to the immune system. This chain is Beta-2-microglobulin (B2M), found in Callimico goeldii (Goeldi's marmoset).